Consider the following 132-residue polypeptide: Ribosome-binding factor A (132 aa).

It belongs to the RbfA family. In terms of assembly, monomer. Binds 30S ribosomal subunits, but not 50S ribosomal subunits or 70S ribosomes.

It is found in the cytoplasm. Functionally, one of several proteins that assist in the late maturation steps of the functional core of the 30S ribosomal subunit. Associates with free 30S ribosomal subunits (but not with 30S subunits that are part of 70S ribosomes or polysomes). Required for efficient processing of 16S rRNA. May interact with the 5'-terminal helix region of 16S rRNA. The chain is Ribosome-binding factor A from Burkholderia cenocepacia (strain ATCC BAA-245 / DSM 16553 / LMG 16656 / NCTC 13227 / J2315 / CF5610) (Burkholderia cepacia (strain J2315)).